The primary structure comprises 333 residues: 4-hydroxy-3-methylbut-2-enyl diphosphate reductase (333 aa).

[4Fe-4S] cluster is bound at residue Cys20. Positions 49 and 85 each coordinate (2E)-4-hydroxy-3-methylbut-2-enyl diphosphate. Residues His49 and His85 each contribute to the dimethylallyl diphosphate site. Positions 49 and 85 each coordinate isopentenyl diphosphate. Cys107 provides a ligand contact to [4Fe-4S] cluster. His135 contacts (2E)-4-hydroxy-3-methylbut-2-enyl diphosphate. Residue His135 coordinates dimethylallyl diphosphate. His135 contributes to the isopentenyl diphosphate binding site. Catalysis depends on Glu137, which acts as the Proton donor. Thr176 contacts (2E)-4-hydroxy-3-methylbut-2-enyl diphosphate. Cys206 serves as a coordination point for [4Fe-4S] cluster. (2E)-4-hydroxy-3-methylbut-2-enyl diphosphate is bound by residues Ser234, Ser235, Asn236, and Ser279. Dimethylallyl diphosphate-binding residues include Ser234, Ser235, Asn236, and Ser279. Residues Ser234, Ser235, Asn236, and Ser279 each coordinate isopentenyl diphosphate.

This sequence belongs to the IspH family. [4Fe-4S] cluster serves as cofactor.

The enzyme catalyses isopentenyl diphosphate + 2 oxidized [2Fe-2S]-[ferredoxin] + H2O = (2E)-4-hydroxy-3-methylbut-2-enyl diphosphate + 2 reduced [2Fe-2S]-[ferredoxin] + 2 H(+). It catalyses the reaction dimethylallyl diphosphate + 2 oxidized [2Fe-2S]-[ferredoxin] + H2O = (2E)-4-hydroxy-3-methylbut-2-enyl diphosphate + 2 reduced [2Fe-2S]-[ferredoxin] + 2 H(+). Its pathway is isoprenoid biosynthesis; dimethylallyl diphosphate biosynthesis; dimethylallyl diphosphate from (2E)-4-hydroxy-3-methylbutenyl diphosphate: step 1/1. The protein operates within isoprenoid biosynthesis; isopentenyl diphosphate biosynthesis via DXP pathway; isopentenyl diphosphate from 1-deoxy-D-xylulose 5-phosphate: step 6/6. Catalyzes the conversion of 1-hydroxy-2-methyl-2-(E)-butenyl 4-diphosphate (HMBPP) into a mixture of isopentenyl diphosphate (IPP) and dimethylallyl diphosphate (DMAPP). Acts in the terminal step of the DOXP/MEP pathway for isoprenoid precursor biosynthesis. The protein is 4-hydroxy-3-methylbut-2-enyl diphosphate reductase of Rhizobium etli (strain CIAT 652).